We begin with the raw amino-acid sequence, 432 residues long: Gamma-glutamyl phosphate reductase (432 aa).

It belongs to the gamma-glutamyl phosphate reductase family.

The protein resides in the cytoplasm. It catalyses the reaction L-glutamate 5-semialdehyde + phosphate + NADP(+) = L-glutamyl 5-phosphate + NADPH + H(+). It participates in amino-acid biosynthesis; L-proline biosynthesis; L-glutamate 5-semialdehyde from L-glutamate: step 2/2. In terms of biological role, catalyzes the NADPH-dependent reduction of L-glutamate 5-phosphate into L-glutamate 5-semialdehyde and phosphate. The product spontaneously undergoes cyclization to form 1-pyrroline-5-carboxylate. The protein is Gamma-glutamyl phosphate reductase of Kineococcus radiotolerans (strain ATCC BAA-149 / DSM 14245 / SRS30216).